Consider the following 507-residue polypeptide: RNA polymerase I-specific transcription initiation factor RRN11 (507 aa).

Residues 37–47 show a composition bias toward polar residues; the sequence is KSTTTDSLPTP. 2 disordered regions span residues 37-76 and 89-124; these read KSTTTDSLPTPENSAAENNDEEEGQNSEAGTYRRSVLQQK and GEIYSTTESETDSQEEETEEGGEHDTGIDKEDSDEE. Residues 97 to 108 show a composition bias toward acidic residues; it reads SETDSQEEETEE. Basic and acidic residues predominate over residues 109–124; that stretch reads GGEHDTGIDKEDSDEE.

In terms of assembly, component of the core factor (CF) complex, which consists of RRN6, RRN7 and RRN11. The CF heterotrimer may further dimerize to form a hexamer. RRN11 interacts with RRN6, RRN7 and SPT15.

Its subcellular location is the nucleus. The protein localises to the nucleolus. Its function is as follows. Acts as a component of the core factor (CF) complex which is essential for the initiation of rDNA transcription by RNA polymerase I. After binding of UAF (upstream activation factor) to an upstream element of the promoter, CF is recruited in a SPT15/TBP-dependent manner to form a preinitiation complex. In Saccharomyces cerevisiae (strain ATCC 204508 / S288c) (Baker's yeast), this protein is RNA polymerase I-specific transcription initiation factor RRN11 (RRN11).